The sequence spans 338 residues: Ketol-acid reductoisomerase (NADP(+)) (338 aa).

In terms of domain architecture, KARI N-terminal Rossmann spans 1–181 (MKVYYDKDCD…GGGRTGIIET (181 aa)). NADP(+)-binding positions include 24–27 (YGSQ), R47, S50, T52, and 82–85 (DEFQ). H107 is an active-site residue. Residue G133 participates in NADP(+) binding. In terms of domain architecture, KARI C-terminal knotted spans 182 to 327 (TFKDETETDL…EQLRSMMPWI (146 aa)). Residues D190, E194, E226, and E230 each contribute to the Mg(2+) site. Residue S251 participates in substrate binding.

It belongs to the ketol-acid reductoisomerase family. The cofactor is Mg(2+).

It carries out the reaction (2R)-2,3-dihydroxy-3-methylbutanoate + NADP(+) = (2S)-2-acetolactate + NADPH + H(+). The enzyme catalyses (2R,3R)-2,3-dihydroxy-3-methylpentanoate + NADP(+) = (S)-2-ethyl-2-hydroxy-3-oxobutanoate + NADPH + H(+). Its pathway is amino-acid biosynthesis; L-isoleucine biosynthesis; L-isoleucine from 2-oxobutanoate: step 2/4. The protein operates within amino-acid biosynthesis; L-valine biosynthesis; L-valine from pyruvate: step 2/4. In terms of biological role, involved in the biosynthesis of branched-chain amino acids (BCAA). Catalyzes an alkyl-migration followed by a ketol-acid reduction of (S)-2-acetolactate (S2AL) to yield (R)-2,3-dihydroxy-isovalerate. In the isomerase reaction, S2AL is rearranged via a Mg-dependent methyl migration to produce 3-hydroxy-3-methyl-2-ketobutyrate (HMKB). In the reductase reaction, this 2-ketoacid undergoes a metal-dependent reduction by NADPH to yield (R)-2,3-dihydroxy-isovalerate. In Pseudomonas fluorescens (strain SBW25), this protein is Ketol-acid reductoisomerase (NADP(+)).